A 161-amino-acid chain; its full sequence is Vasotocin-neurophysin VT (161 aa).

An N-terminal signal peptide occupies residues 1-19 (MAEPSLPLSFLCLLALSSA). C20 and C25 are disulfide-bonded. G28 bears the Glycine amide mark. Disulfide bonds link C41–C85, C44–C58, C52–C75, C59–C65, C92–C104, C98–C116, and C105–C110.

The protein belongs to the vasopressin/oxytocin family. In terms of processing, seven disulfide bonds are present in neurophysin.

It is found in the secreted. Functionally, vasotocin is an antidiuretic hormone. The polypeptide is Vasotocin-neurophysin VT (Gallus gallus (Chicken)).